Reading from the N-terminus, the 395-residue chain is uncharacterized protein (395 aa).

The stretch at Lys-182 to Lys-238 forms a coiled coil.

This is an uncharacterized protein from Acanthamoeba polyphaga (Amoeba).